The following is a 542-amino-acid chain: 2,3-bisphosphoglycerate-independent phosphoglycerate mutase (542 aa).

2 residues coordinate Mn(2+): D13 and S63. The Phosphoserine intermediate role is filled by S63. Residues H124, 154-155, R186, R192, 263-266, and K357 each bind substrate; these read RD and RADR. Mn(2+)-binding residues include D424, H428, D465, H466, and H484.

It belongs to the BPG-independent phosphoglycerate mutase family. Monomer. Mn(2+) serves as cofactor.

The catalysed reaction is (2R)-2-phosphoglycerate = (2R)-3-phosphoglycerate. Its pathway is carbohydrate degradation; glycolysis; pyruvate from D-glyceraldehyde 3-phosphate: step 3/5. In terms of biological role, catalyzes the interconversion of 2-phosphoglycerate and 3-phosphoglycerate. The protein is 2,3-bisphosphoglycerate-independent phosphoglycerate mutase of Herpetosiphon aurantiacus (strain ATCC 23779 / DSM 785 / 114-95).